The primary structure comprises 528 residues: Probable serine/threonine-protein kinase DDB_G0282417 (528 aa).

A compositionally biased stretch (low complexity) spans 49 to 77 (NNNNNNNNNNNNNNNNNNNNNNNNNNKNN). The segment at 49 to 84 (NNNNNNNNNNNNNNNNNNNNNNNNNNKNNNDGDDAA) is disordered. The 331-residue stretch at 136–466 (QQNRVLIGEG…ESLINNHQYS (331 aa)) folds into the Protein kinase domain. Residues 142-150 (IGEGHYGKV) and K166 contribute to the ATP site. D266 acts as the Proton acceptor in catalysis.

This sequence belongs to the protein kinase superfamily. Ser/Thr protein kinase family.

The catalysed reaction is L-seryl-[protein] + ATP = O-phospho-L-seryl-[protein] + ADP + H(+). It catalyses the reaction L-threonyl-[protein] + ATP = O-phospho-L-threonyl-[protein] + ADP + H(+). The sequence is that of Probable serine/threonine-protein kinase DDB_G0282417 from Dictyostelium discoideum (Social amoeba).